We begin with the raw amino-acid sequence, 256 residues long: MQGPWLMMALALIFVLTGIPKSCALLEAAQEEGAVTPDLPGLEKVQVRPERRFLRKDLQRVRGDLGAALDSWITKRQHPGKREEKEEDVEAEERGDLGEVGAWRPHKRQHPGRRANQDKDSWSDEGDSDWLPPSWLPDFFLDSWFSDAPQVKRQHPGRRSFPWMESDVTKRQHPGRRFIDPELQRSWEETEGEEGGLMPEKRQHPGKRAVGHPCGPQGICGQTGLLQLLGDLSRGQETLAKQTPQLEAWVREPLEE.

Positions 1-24 (MQGPWLMMALALIFVLTGIPKSCA) are cleaved as a signal peptide. Disordered stretches follow at residues 76 to 128 (RQHP…EGDS) and 151 to 215 (VKRQ…HPCG). Residues Pro79, Pro111, Pro156, and Pro174 each carry the proline amide modification. Positions 104–113 (RPHKRQHPGR) are enriched in basic residues. Basic and acidic residues predominate over residues 177–188 (RFIDPELQRSWE). Pro205 is subject to Proline amide.

It belongs to the TRH family. Specifically expressed in hypothalamus and testis.

Its subcellular location is the secreted. Its function is as follows. Functions as a regulator of the biosynthesis of TSH in the anterior pituitary gland and as a neurotransmitter/ neuromodulator in the central and peripheral nervous systems. The chain is Pro-thyrotropin-releasing hormone (Trh) from Mus musculus (Mouse).